Here is a 264-residue protein sequence, read N- to C-terminus: Short chain dehydrogenase/reductase AacuN (264 aa).

Positions 24, 70, 97, and 130 each coordinate NADP(+). Active-site proton donor residues include Ser-146, Ser-147, and Tyr-161. Positions 161, 165, and 196 each coordinate NADP(+). The Lowers pKa of active site Tyr role is filled by Lys-165.

Belongs to the short-chain dehydrogenases/reductases (SDR) family.

The enzyme catalyses 3,8,9,10-tetrahydroxy-6-methyl-1,4-dihydroanthracen-1-one + NADPH + H(+) = (3R)-3,8,9,10-tetrahydroxy-6-methyl-1,2,3,4-tetrahydroanthracen-1-one + NADP(+). It functions in the pathway secondary metabolite biosynthesis. In terms of biological role, atrochrysone carboxylic acid synthase; part of the gene cluster that mediates the biosynthesis of the tetrahydroxanthone dimer secalonic acid D. The pathway begins with the synthesis of atrochrysone thioester by the polyketide synthase AacuL. The atrochrysone carboxyl ACP thioesterase AacuM then breaks the thioester bond and releases the atrochrysone carboxylic acid from AacuL. Atrochrysone carboxylic acid is decarboxylated by the decarboxylase AacuI, and oxidized by the anthrone oxygenase AacuG to yield emodin. Emodin is then reduced to emodin hydroquinone by a yet unidentified oxidoreductase. A-ring reduction by the short chain dehydrogenase AacuN, dehydration by the scytalone dehydratase-like protein AacuK and probable spontaneous re-oxidation, results in overall deoxygenation to chrysophanol. Baeyer-Villiger oxidation by the Baeyer-Villiger monooxygenase (BVMO) AacuH then yields monodictyphenone. Monodictyphenone is transformed into compounds with the tetrahydroxanthone skeleton via methylesterification by the methyltransferase AacuQ, followed by the action of the flavin-dependent monooxygenase AacuC, the isomerase AacuP, and the short chain dehydrogenase/reductase AacuF or AacuD. AacuF and AacuD should accept the same compound as a substrate but perform the ketoreduction with a different stereoselectivity, thus yielding blennolides B and A, respectively. In the final step of the biosynthesis, the cytochrome P450 monooxygenase AacuE accepts blennolide B and/or blennolide A to conduct the dimerization reaction to furnish the tetrahydroxanthone dimers, secalonic acids D, B, and F. This chain is Short chain dehydrogenase/reductase AacuN, found in Aspergillus aculeatus (strain ATCC 16872 / CBS 172.66 / WB 5094).